The primary structure comprises 256 residues: MVFXLPNKNVIFVAGLGGIGLDTSREIVKAGPKNLVILDRVENPAAIAELQAINPKVTVTFYPYDVTVPLSESVKLLKTIFDKLKTIDLLINGAGILDDHQIERTIAVNFTGLVNTTTAILQFWDKRKGGPGGVIANICSVTGFNAIYQVPVYSASKAAVVSFTQSIAKLAPITGVTAYSINPGITKTTLVHKFNSWLDVEPRVAELLDEHPTQSTTACAQNFVKAIELNQNGAIWKLDVGRLDPVQWTKHWDSGI.

12–35 is a binding site for NAD(+); the sequence is FVAGLGGIGLDTSREIVKAGPKNL. Ser-140 contacts substrate. The active-site Proton acceptor is the Tyr-153.

This sequence belongs to the short-chain dehydrogenases/reductases (SDR) family. Homodimer.

The enzyme catalyses a primary alcohol + NAD(+) = an aldehyde + NADH + H(+). It carries out the reaction a secondary alcohol + NAD(+) = a ketone + NADH + H(+). The polypeptide is Alcohol dehydrogenase (Adh) (Zaprionus tuberculatus (Vinegar fly)).